A 380-amino-acid chain; its full sequence is Alcohol dehydrogenase-like 4 (380 aa).

Zn(2+) contacts are provided by Cys47, Thr49, His70, Cys100, Cys103, Cys106, Cys114, and Cys180. 2 residues coordinate an alcohol: Thr49 and His70. Thr49 contributes to the NAD(+) binding site. NAD(+)-binding positions include 205–210, Asp229, Lys234, 298–300, Phe325, and Arg375; these read GLGAVG and LGV.

The protein belongs to the zinc-containing alcohol dehydrogenase family. Class-III subfamily. As to quaternary structure, homodimer. Zn(2+) serves as cofactor.

It localises to the cytoplasm. The enzyme catalyses a primary alcohol + NAD(+) = an aldehyde + NADH + H(+). The catalysed reaction is a secondary alcohol + NAD(+) = a ketone + NADH + H(+). This is Alcohol dehydrogenase-like 4 from Arabidopsis thaliana (Mouse-ear cress).